An 88-amino-acid polypeptide reads, in one-letter code: Small ribosomal subunit protein bS20 (88 aa).

The protein belongs to the bacterial ribosomal protein bS20 family.

Binds directly to 16S ribosomal RNA. The sequence is that of Small ribosomal subunit protein bS20 from Bartonella tribocorum (strain CIP 105476 / IBS 506).